The primary structure comprises 955 residues: 2-oxoglutarate dehydrogenase E1 component (955 aa).

It belongs to the alpha-ketoglutarate dehydrogenase family. In terms of assembly, homodimer. Part of the 2-oxoglutarate dehydrogenase (OGDH) complex composed of E1 (2-oxoglutarate dehydrogenase), E2 (dihydrolipoamide succinyltransferase) and E3 (dihydrolipoamide dehydrogenase); the complex contains multiple copies of the three enzymatic components (E1, E2 and E3). Thiamine diphosphate is required as a cofactor.

It catalyses the reaction N(6)-[(R)-lipoyl]-L-lysyl-[protein] + 2-oxoglutarate + H(+) = N(6)-[(R)-S(8)-succinyldihydrolipoyl]-L-lysyl-[protein] + CO2. E1 component of the 2-oxoglutarate dehydrogenase (OGDH) complex which catalyzes the decarboxylation of 2-oxoglutarate, the first step in the conversion of 2-oxoglutarate to succinyl-CoA and CO(2). The sequence is that of 2-oxoglutarate dehydrogenase E1 component from Bacillus cereus (strain ZK / E33L).